Consider the following 1021-residue polypeptide: Collagen alpha-1(I) chain (1021 aa).

Positions 1–1021 (DEKSAGGISV…PGPPGPPGPP (1021 aa)) are disordered. At lysine 3 the chain carries Allysine. A Phosphoserine modification is found at serine 4. Residues proline 23, proline 26, proline 29, proline 38, proline 41, proline 44, proline 59, proline 74, proline 80, proline 89, and proline 95 each carry the 4-hydroxyproline modification. The span at 31-50 (PQGFQGPPGEPGEPGASGPM) shows a compositional bias: low complexity. A compositionally biased stretch (basic and acidic residues) spans 62–76 (NGDDGEAGKPGRPGE). Lysine 98 carries the post-translational modification 5-hydroxylysine; alternate. Lysine 98 carries O-linked (Gal...) hydroxylysine; alternate glycosylation. Serine 104 carries the post-translational modification Phosphoserine. Positions 112 to 128 (DAGPAGPKGEPGSPGEN) are enriched in low complexity. A 4-hydroxyproline mark is found at proline 122, proline 125, proline 131, proline 140, proline 146, proline 167, proline 176, proline 179, proline 206, proline 209, proline 221, proline 227, proline 236, proline 242, proline 245, and proline 260. The span at 146-164 (PGASGPAGARGNDGATGAA) shows a compositional bias: low complexity. Positions 166 to 178 (PPGPTGPAGPPGF) are enriched in pro residues. A compositionally biased stretch (low complexity) spans 212 to 262 (AGAAGPAGNPGADGQPGAKGANGAPGIAGAPGFPGARGPSGPQGPSGAPGP). Lysine 263 is modified (5-hydroxylysine). 4-hydroxyproline occurs at positions 269, 272, 284, 293, 308, 314, 323, and 329. A compositionally biased stretch (gly residues) spans 318–327 (GERGGPGSRG). A 5-hydroxylysine modification is found at lysine 338. 4-hydroxyproline is present on residues proline 347, proline 356, proline 362, proline 368, proline 377, proline 380, proline 389, proline 398, proline 404, proline 416, proline 425, proline 434, proline 437, proline 455, proline 472, proline 478, proline 484, proline 490, proline 496, proline 502, proline 514, proline 523, proline 534, proline 546, proline 549, proline 555, proline 561, and proline 570. Positions 371–425 (KGLTGSPGSPGPDGKTGPPGPAGQDGRPGPAGPPGARGQAGVMGFPGPKGAAGEP) are enriched in low complexity. Residues 484–493 (PGEAGKPGEQ) are compositionally biased toward low complexity. The segment covering 536-558 (NDGAKGDAGAPGAPGSQGAPGLQ) has biased composition (low complexity). The residue at position 582 (lysine 582) is a 5-hydroxylysine. Residues proline 588 and proline 603 each carry the 4-hydroxyproline modification. Residues 615 to 629 (AGPSGPAGPTGARGA) show a composition bias toward low complexity. Serine 618 is modified (phosphoserine). Proline 630, proline 636, proline 639, proline 648, proline 654, proline 681, and proline 690 each carry 4-hydroxyproline. Residues 642-672 (AGFAGPPGADGQPGAKGEPGDAGAKGDAGPS) are compositionally biased toward low complexity. Lysine 693 bears the 5-hydroxylysine mark. The span at 698-714 (SAGPPGATGFPGAAGRV) shows a compositional bias: low complexity. 2 positions are modified to 4-hydroxyproline: proline 702 and proline 708. Proline 716 is subject to 3-hydroxyproline. 16 positions are modified to 4-hydroxyproline: proline 717, proline 726, proline 729, proline 750, proline 759, proline 768, proline 777, proline 794, proline 803, proline 806, proline 812, proline 827, proline 833, proline 839, proline 848, and proline 854. Residues 743–752 (ETGPAGRPGE) are compositionally biased toward low complexity. A compositionally biased stretch (low complexity) spans 762 to 777 (SGEKGSPGADGPAGAP). Residues 826 to 836 (PPGPMGPPGLA) are compositionally biased toward pro residues. Positions 838-853 (PPGEAGREGSPGAEGS) are enriched in low complexity. Lysine 863 carries the 5-hydroxylysine modification. Over residues 871–886 (PGPPGAPGAPGAPGPV) the composition is skewed to pro residues. 4-hydroxyproline occurs at positions 874, 877, and 880. The segment covering 907-921 (AGPAGARGPAGPQGP) has biased composition (low complexity). Over residues 922-936 (RGDKGETGEQGDRGI) the composition is skewed to basic and acidic residues. Residue lysine 925 is modified to 5-hydroxylysine. The residue at position 937 (lysine 937) is a 5-hydroxylysine; alternate. O-linked (Gal...) hydroxylysine; alternate glycosylation occurs at lysine 937. 4-hydroxyproline occurs at positions 952, 955, 973, and 988. Positions 955–988 (PGEQGPSGASGPAGPRGPPGSAGTPGKDGLNGLP) are enriched in low complexity. Proline 993 carries the 3-hydroxyproline modification. Proline 994 carries the 4-hydroxyproline modification. Residues 1006-1021 (VGPPGPPGPPGPPGPP) are compositionally biased toward pro residues. Proline 1008 carries the 3-hydroxyproline modification. A 4-hydroxyproline modification is found at proline 1009. Proline 1011 is modified (3-hydroxyproline). Proline 1012 bears the 4-hydroxyproline mark. Proline 1014 carries the 3-hydroxyproline modification. Residues proline 1015, proline 1018, and proline 1021 each carry the 4-hydroxyproline modification.

The protein belongs to the fibrillar collagen family. Trimers of one alpha 2(I) and two alpha 1(I) chains. In terms of processing, contains mostly 4-hydroxyproline. Proline residues at the third position of the tripeptide repeating unit (G-X-Y) are hydroxylated in some or all of the chains. Contains 3-hydroxyproline at a few sites. This modification occurs on the first proline residue in the sequence motif Gly-Pro-Hyp, where Hyp is 4-hydroxyproline. Post-translationally, lysine residues at the third position of the tripeptide repeating unit (G-X-Y) are 5-hydroxylated in some or all of the chains. In terms of processing, O-glycosylated on hydroxylated lysine residues. The O-linked glycan consists of a Glc-Gal disaccharide. Expressed in bones.

It is found in the secreted. The protein localises to the extracellular space. It localises to the extracellular matrix. Its function is as follows. Type I collagen is a member of group I collagen (fibrillar forming collagen). The sequence is that of Collagen alpha-1(I) chain from Doedicurus sp. (South American giant glyptodont).